The following is a 115-amino-acid chain: MMMLMTSITISFLLPMIVMLLATTLSKKSINDREKSSPFECGFDPKLNMPFSIQFFLIAVIFLIFDVEIALILPIVIIMKTSNIMVWTLSTMLFIIILLVGLYYEWNQGALKWAN.

Helical transmembrane passes span 1-21 (MMMLMTSITISFLLPMIVMLL), 58-78 (IAVIFLIFDVEIALILPIVII), and 84-104 (IMVWTLSTMLFIIILLVGLYY).

The protein belongs to the complex I subunit 3 family.

The protein localises to the mitochondrion membrane. The catalysed reaction is a ubiquinone + NADH + 5 H(+)(in) = a ubiquinol + NAD(+) + 4 H(+)(out). Functionally, core subunit of the mitochondrial membrane respiratory chain NADH dehydrogenase (Complex I) that is believed to belong to the minimal assembly required for catalysis. Complex I functions in the transfer of electrons from NADH to the respiratory chain. The immediate electron acceptor for the enzyme is believed to be ubiquinone. The chain is NADH-ubiquinone oxidoreductase chain 3 (ND3) from Locusta migratoria (Migratory locust).